A 214-amino-acid polypeptide reads, in one-letter code: Ceramide-1-phosphate transfer protein (214 aa).

Asp-56, Lys-60, Arg-106, Arg-110, and His-150 together coordinate an N-acylsphingoid base 1-phosphate.

The protein belongs to the GLTP family. As to expression, ubiquitous. Detected in heart, brain, placenta, lung, liver, skeletal muscle, kidney, pancreas, spleen, thymus, prostate, testis, ovary, small intestine, colon and peripheral blood leukocytes.

The protein localises to the cytoplasm. It is found in the cytosol. The protein resides in the golgi apparatus. It localises to the trans-Golgi network membrane. Its subcellular location is the cell membrane. The protein localises to the endosome membrane. It is found in the nucleus outer membrane. It carries out the reaction N-(hexadecanoyl)-sphing-4-enine-1-phosphate(in) = N-(hexadecanoyl)-sphing-4-enine-1-phosphate(out). The enzyme catalyses N-(9Z-octadecenoyl)-sphing-4-enine-1-phosphate(in) = N-(9Z-octadecenoyl)-sphing-4-enine-1-phosphate(out). In terms of biological role, mediates the intracellular transfer of ceramide-1-phosphate (C1P) between organelle membranes and the cell membrane. Required for normal structure of the Golgi stacks. Can bind phosphoceramides with a variety of aliphatic chains, but has a preference for lipids with saturated C16:0 or monounsaturated C18:1 aliphatic chains, and is inefficient with phosphoceramides containing lignoceryl (C24:0). Plays a role in the regulation of the cellular levels of ceramide-1-phosphate, and thereby contributes to the regulation of phospholipase PLA2G4A activity and the release of arachidonic acid. Has no activity with galactosylceramide, lactosylceramide, sphingomyelin, phosphatidylcholine, phosphatidic acid and ceramide. C1P transfer is stimulated by phosphatidylserine in C1P source vesicles. Regulates autophagy, inflammasome mediated IL1B and IL18 processing, and pyroptosis, but not apoptosis. This Homo sapiens (Human) protein is Ceramide-1-phosphate transfer protein.